Consider the following 1465-residue polypeptide: Myomesin-2 (1465 aa).

Residues 38 to 61 (ASTQASSQKSLSQRSSSQRASSQT) form a disordered region. Residues 41–61 (QASSQKSLSQRSSSQRASSQT) show a composition bias toward low complexity. 2 Ig-like C2-type domains span residues 154–245 (PEIL…AAVV) and 266–371 (PLSS…AFLF). Fibronectin type-III domains are found at residues 385–480 (APMD…ALDP), 513–608 (PPTG…AQDV), 614–707 (APGR…VQAA), 710–812 (VPSH…TMPE), and 815–912 (PAYD…ARPG). Ig-like C2-type domains lie at 904–1002 (PVLV…EELE), 1130–1211 (PHFA…QDVS), and 1345–1434 (RLIG…VTVS). Residues 1442–1465 (IPDMAPPQQAKPKLIPASASAAGQ) form a disordered region.

Interacts with TTN/titin.

The protein resides in the cytoplasm. It localises to the myofibril. It is found in the sarcomere. Its subcellular location is the m line. In terms of biological role, major component of the vertebrate myofibrillar M band. Binds myosin, titin, and light meromyosin. This binding is dose dependent. The chain is Myomesin-2 (MYOM2) from Homo sapiens (Human).